Here is a 330-residue protein sequence, read N- to C-terminus: MYRNCRKAFTFSLRHYSTAPTEKPSLKLVAELRKRTEVSITKAREALSASNNDVSAALEWLQKDLITSGAKKAAKLGGRPTPEGLISVSVLSRGGESHVAGVRAAMIELNCETDFVGRNELFGRLAADIAHTAAYISDRTGSATAFNRAFPLDVLKDAPLLSQLNPTAPPTGTVGSSIRDMISKVGENVSLRRALAVVENSPSPNGDIALRIGSYVHDYKIGSLALLALKSRGISSSLNSDAFRERLEFLERALARQILGFETTSVNSSEDQTSLYNQPFMMFSREMDSPLVGEVLRNWSEKEGLLKENSDGGVAVLDFAKWKVGETFDE.

The transit peptide at 1–16 (MYRNCRKAFTFSLRHY) directs the protein to the mitochondrion.

The protein belongs to the EF-Ts family.

The protein resides in the mitochondrion. Functionally, associates with the EF-Tu.GDP complex and induces the exchange of GDP to GTP. It remains bound to the aminoacyl-tRNA.EF-Tu.GTP complex up to the GTP hydrolysis stage on the ribosome. The polypeptide is Elongation factor Ts, mitochondrial (Laccaria bicolor (strain S238N-H82 / ATCC MYA-4686) (Bicoloured deceiver)).